The sequence spans 356 residues: Thrombopoietin (356 aa).

The N-terminal stretch at 1 to 21 (MELTDLLLAAMLLAVARLTLS) is a signal peptide. 2 cysteine pairs are disulfide-bonded: Cys-28/Cys-172 and Cys-50/Cys-106. N-linked (GlcNAc...) asparagine glycans are attached at residues Asn-197, Asn-206, Asn-235, Asn-249, Asn-256, Asn-336, and Asn-351. The interval 291–356 (GGLPPSPSLA…PHPRNLSQET (66 aa)) is disordered. Polar residues predominate over residues 330 to 339 (PSTTMPNSTA).

Belongs to the EPO/TPO family. In terms of tissue distribution, found mainly in the liver, kidney and skeletal muscle.

It is found in the secreted. Its function is as follows. Lineage-specific cytokine affecting the proliferation and maturation of megakaryocytes from their committed progenitor cells. It acts at a late stage of megakaryocyte development. It may be the major physiological regulator of circulating platelets. The protein is Thrombopoietin (Thpo) of Mus musculus (Mouse).